The primary structure comprises 150 residues: MMIGEQLLKKLFPDFEELVQPAGIDLRVDKVYRQMGPGSLIDDEKNLPPLEMLEPPIYRLEPGKAYLASVDRMIEIPEGYAMLYLPRSTLLRSFVSVQTAVGDPGFRGTLQFLLHNHGEYEYTLKRGERIVQAVVFPVEGSGKYSGSYQE.

The protein belongs to the dCTP deaminase family. Archaeal dUTPase subfamily.

The catalysed reaction is dUTP + H2O = dUMP + diphosphate + H(+). The protein operates within pyrimidine metabolism; dUMP biosynthesis; dUMP from dCTP (dUTP route): step 2/2. Functionally, this enzyme is involved in nucleotide metabolism: it produces dUMP, the immediate precursor of thymidine nucleotides and it decreases the intracellular concentration of dUTP so that uracil cannot be incorporated into DNA. This chain is Probable deoxyuridine 5'-triphosphate nucleotidohydrolase, found in Methanothermobacter thermautotrophicus (strain ATCC 29096 / DSM 1053 / JCM 10044 / NBRC 100330 / Delta H) (Methanobacterium thermoautotrophicum).